The primary structure comprises 141 residues: MSNITIYHNPHCGTSRNTLEMIRNSGIEPTVILYLETPPSRDELLKLIADMGISVRALLRKNVEPYEELGLAEDKFTDDQLIDFMLQHPILINRPIVVTPLGTKLCRPSEVVLDILPDAQKAAFTKEDGEKVVDDSGKRLK.

The active-site Nucleophile; cysteine thioarsenate intermediate is the cysteine 12.

The protein belongs to the ArsC family.

The enzyme catalyses [glutaredoxin]-dithiol + arsenate + glutathione + H(+) = glutathionyl-S-S-[glutaredoxin] + arsenite + H2O. Its function is as follows. Involved in resistance to arsenate. Catalyzes the reduction of arsenate [As(V)] to arsenite [As(III)]. This Escherichia coli protein is Arsenate reductase.